The primary structure comprises 126 residues: Aspartate 1-decarboxylase (126 aa).

Serine 25 serves as the catalytic Schiff-base intermediate with substrate; via pyruvic acid. Serine 25 is modified (pyruvic acid (Ser)). Threonine 57 is a binding site for substrate. Tyrosine 58 functions as the Proton donor in the catalytic mechanism. 73-75 (GAA) contributes to the substrate binding site.

The protein belongs to the PanD family. As to quaternary structure, heterooctamer of four alpha and four beta subunits. Pyruvate serves as cofactor. In terms of processing, is synthesized initially as an inactive proenzyme, which is activated by self-cleavage at a specific serine bond to produce a beta-subunit with a hydroxyl group at its C-terminus and an alpha-subunit with a pyruvoyl group at its N-terminus.

It is found in the cytoplasm. The enzyme catalyses L-aspartate + H(+) = beta-alanine + CO2. It participates in cofactor biosynthesis; (R)-pantothenate biosynthesis; beta-alanine from L-aspartate: step 1/1. Its function is as follows. Catalyzes the pyruvoyl-dependent decarboxylation of aspartate to produce beta-alanine. The sequence is that of Aspartate 1-decarboxylase from Methylobacillus flagellatus (strain ATCC 51484 / DSM 6875 / VKM B-1610 / KT).